Reading from the N-terminus, the 56-residue chain is Large ribosomal subunit protein bL32 (56 aa).

The interval 1-21 (MAVQQNRKTRSRRGMRRSHDA) is disordered. Residues 7-16 (RKTRSRRGMR) are compositionally biased toward basic residues.

The protein belongs to the bacterial ribosomal protein bL32 family.

The protein is Large ribosomal subunit protein bL32 of Vibrio cholerae serotype O1 (strain ATCC 39541 / Classical Ogawa 395 / O395).